The sequence spans 2979 residues: Polyketide synthase-nonribosomal peptide synthetase TwmB (2979 aa).

The Ketosynthase family 3 (KS3) domain occupies 5–435; that stretch reads GAEIAIIGSG…GTNAHAILES (431 aa). Active-site for beta-ketoacyl synthase activity residues include Cys-176, His-315, and His-355. A malonyl-CoA:ACP transacylase (MAT) domain region spans residues 549-864; that stretch reads VFTGQGAQWA…PYTGLFTRGV (316 aa). Ser-643 (for malonyltransferase activity) is an active-site residue. The N-terminal hotdog fold stretch occupies residues 936–1070; sequence HDLLGHLTPN…GRVRIHLGEA (135 aa). A dehydratase (DH) domain region spans residues 936–1234; that stretch reads HDLLGHLTPN…ECVPFSRQTA (299 aa). Residues 936-1235 form the PKS/mFAS DH domain; that stretch reads HDLLGHLTPN…CVPFSRQTAK (300 aa). His-968 functions as the Proton acceptor; for dehydratase activity in the catalytic mechanism. The C-terminal hotdog fold stretch occupies residues 1085–1235; that stretch reads LVSVSEKKFY…CVPFSRQTAK (151 aa). Asp-1141 acts as the Proton donor; for dehydratase activity in catalysis. The tract at residues 1387–1572 is inactive methyltransferase (MT) domain; the sequence is NFTAHLAGIL…GIDTSTVEQP (186 aa). A ketoreductase (KR)domain region spans residues 2098-2271; that stretch reads TYWLVGLTGG…AASVMDIGAV (174 aa). Residues 2380–2465 enclose the Carrier domain; that stretch reads RNNEEAYGIV…ELVDTATEAI (86 aa). Ser-2425 bears the O-(pantetheine 4'-phosphoryl)serine mark. A disordered region spans residues 2476-2497; that stretch reads YPAEQTSSQNSDSGQDMASSFD. Polar residues predominate over residues 2479–2497; sequence EQTSSQNSDSGQDMASSFD. The interval 2534–2970 is condensation; sequence KSIPVSFTQA…MTLGQAALAE (437 aa).

As to quaternary structure, interacts with TwmE. The cofactor is pantetheine 4'-phosphate.

It catalyses the reaction 5-aminopentanoate + 7 malonyl-CoA + acetyl-CoA + 11 NADPH + 17 H(+) = wortmanamide A + 7 CO2 + 11 NADP(+) + 8 CoA + 6 H2O. The enzyme catalyses 5-aminopentanoate + 8 malonyl-CoA + acetyl-CoA + 13 NADPH + 20 H(+) = wortmanamide B + 8 CO2 + 13 NADP(+) + 9 CoA + 7 H2O. It functions in the pathway secondary metabolite biosynthesis. Polyketide synthase-nonribosomal peptide synthetase; part of the gene cluster that mediates the biosynthesis of wortmanamides A and B, reduced long-chain polyketides amidated with a specific omega-amino acid, 5-aminopentanoic acid (5PA). The PKS modules of TwmB are involved in the synthesis of the polyketide backbone, whereas the non-canonical C domain of TwmB is a bonafide condensation domain that specifically selects 5PA and catalyzes amidation to release polyketide chain. The C domain clearly prefers C16 and C18 fatty acyl substrates, which is consistent with simultaneous formation of both octaketide and nonaketide acyl amides wortmanamides A and B. Because TwmB lacks a designated enoylreductase (ER) domain, the required activity is provided the enoyl reductase TwmE. The roles of the remaining enzymes have still to be clarified. The protein is Polyketide synthase-nonribosomal peptide synthetase TwmB of Talaromyces wortmannii (Penicillium wortmannii).